Here is a 272-residue protein sequence, read N- to C-terminus: Putative pyruvate, phosphate dikinase regulatory protein (272 aa).

154–161 provides a ligand contact to ADP; sequence GVSRTSKS.

This sequence belongs to the pyruvate, phosphate/water dikinase regulatory protein family. PDRP subfamily.

The enzyme catalyses N(tele)-phospho-L-histidyl/L-threonyl-[pyruvate, phosphate dikinase] + ADP = N(tele)-phospho-L-histidyl/O-phospho-L-threonyl-[pyruvate, phosphate dikinase] + AMP + H(+). It catalyses the reaction N(tele)-phospho-L-histidyl/O-phospho-L-threonyl-[pyruvate, phosphate dikinase] + phosphate + H(+) = N(tele)-phospho-L-histidyl/L-threonyl-[pyruvate, phosphate dikinase] + diphosphate. Bifunctional serine/threonine kinase and phosphorylase involved in the regulation of the pyruvate, phosphate dikinase (PPDK) by catalyzing its phosphorylation/dephosphorylation. The protein is Putative pyruvate, phosphate dikinase regulatory protein of Wolbachia sp. subsp. Brugia malayi (strain TRS).